A 206-amino-acid chain; its full sequence is Large ribosomal subunit protein uL4 (206 aa).

Belongs to the universal ribosomal protein uL4 family. In terms of assembly, part of the 50S ribosomal subunit.

Its function is as follows. One of the primary rRNA binding proteins, this protein initially binds near the 5'-end of the 23S rRNA. It is important during the early stages of 50S assembly. It makes multiple contacts with different domains of the 23S rRNA in the assembled 50S subunit and ribosome. Forms part of the polypeptide exit tunnel. In Rhodopseudomonas palustris (strain HaA2), this protein is Large ribosomal subunit protein uL4.